The chain runs to 336 residues: NADH-quinone oxidoreductase subunit H (336 aa).

8 consecutive transmembrane segments (helical) span residues 17 to 37, 85 to 105, 116 to 136, 154 to 174, 190 to 210, 247 to 267, 274 to 294, and 309 to 329; these read WFII…TYAI, ALFT…LAVM, LGIG…GVIT, AAQM…IVLL, VWNI…AQAE, VYMF…WLPI, IPGI…QFWI, and FAWK…AVVV.

It belongs to the complex I subunit 1 family. NDH-1 is composed of 14 different subunits. Subunits NuoA, H, J, K, L, M, N constitute the membrane sector of the complex.

The protein localises to the cell membrane. The enzyme catalyses a quinone + NADH + 5 H(+)(in) = a quinol + NAD(+) + 4 H(+)(out). Functionally, NDH-1 shuttles electrons from NADH, via FMN and iron-sulfur (Fe-S) centers, to quinones in the respiratory chain. The immediate electron acceptor for the enzyme in this species is believed to be ubiquinone. Couples the redox reaction to proton translocation (for every two electrons transferred, four hydrogen ions are translocated across the cytoplasmic membrane), and thus conserves the redox energy in a proton gradient. This subunit may bind ubiquinone. The polypeptide is NADH-quinone oxidoreductase subunit H (Brevibacillus brevis (strain 47 / JCM 6285 / NBRC 100599)).